A 604-amino-acid chain; its full sequence is Dopamine receptor 3 (604 aa).

Over 1-23 (MLTGQHHIPGIESPLMVVLWRVA) the chain is Extracellular. The helical transmembrane segment at 24 to 44 (AGVFLPLVPTMAVFGNVLVIL) threads the bilayer. Over 45-58 (SVYRERNLQTVTNM) the chain is Cytoplasmic. A helical transmembrane segment spans residues 59–79 (LIVSLAVSDLFVAIGVMSFGV). At 80–96 (YYEWNGFKWGLGSFFCH) the chain is on the extracellular side. A disulfide bridge connects residues Cys-95 and Cys-170. The helical transmembrane segment at 97–117 (VYQALDVACSTASILNLLAIS) threads the bilayer. Topologically, residues 118–141 (LDRYIAIGHPISYAQYGARGGRAM) are cytoplasmic. The chain crosses the membrane as a helical span at residues 142-162 (ISITIVWGVSCAVALPLLLGV). Over 163–179 (NPMENDQCELANPWFNM) the chain is Extracellular. Residues 180–200 (ISSIFSFFIPCIAMIILYTII) traverse the membrane as a helical segment. Topologically, residues 201-520 (FRRLRQRERA…TKQMRREHKA (320 aa)) are cytoplasmic. Residues 399 to 430 (SIQDEKKMNSRPPENPFAHQNGTNKQRLLPNP) form a disordered region. Residues 521–541 (TVTLAVVLAVFLFCWLPFFIL) form a helical membrane-spanning segment. At 542–559 (HLSNSICLVIDSNSDCIG) the chain is on the extracellular side. Residues 560–580 (FLPLYLATWLGYLNSSLNPLI) traverse the membrane as a helical segment. Residues 581–604 (YTVFDQRFRNAFRNILSCGFFKKR) lie on the Cytoplasmic side of the membrane.

The protein belongs to the G-protein coupled receptor 1 family.

The protein resides in the cell membrane. Functionally, receptor for dopamine. The activity of this receptor is mediated by G proteins which activate adenylyl cyclase. In terms of antagonist responses, would be classed with the D2-like dopamine receptor group. Mediates the effect of dopamine on the inhibition of locomotion. Acts as an antagonist of dop-1. The polypeptide is Dopamine receptor 3 (Caenorhabditis briggsae).